Consider the following 913-residue polypeptide: Bifunctional uridylyltransferase/uridylyl-removing enzyme (913 aa).

A uridylyltransferase region spans residues 1-358; it reads MFNCDVTAID…PDEERPKKQP (358 aa). The tract at residues 359–729 is uridylyl-removing; the sequence is INARFNQVGD…EHRELALDAV (371 aa). The HD domain maps to 476-592; it reads VDAHTLFLIR…TLFADLVGNV (117 aa). ACT domains are found at residues 730–815 and 838–913; these read QVFV…RIPR and IMSL…NDRV.

The protein belongs to the GlnD family. Mg(2+) serves as cofactor.

The enzyme catalyses [protein-PII]-L-tyrosine + UTP = [protein-PII]-uridylyl-L-tyrosine + diphosphate. It carries out the reaction [protein-PII]-uridylyl-L-tyrosine + H2O = [protein-PII]-L-tyrosine + UMP + H(+). With respect to regulation, uridylyltransferase (UTase) activity is inhibited by glutamine, while glutamine activates uridylyl-removing (UR) activity. Modifies, by uridylylation and deuridylylation, the PII regulatory proteins (GlnB and homologs), in response to the nitrogen status of the cell that GlnD senses through the glutamine level. Under low glutamine levels, catalyzes the conversion of the PII proteins and UTP to PII-UMP and PPi, while under higher glutamine levels, GlnD hydrolyzes PII-UMP to PII and UMP (deuridylylation). Thus, controls uridylylation state and activity of the PII proteins, and plays an important role in the regulation of nitrogen assimilation and metabolism. The sequence is that of Bifunctional uridylyltransferase/uridylyl-removing enzyme from Psychrobacter cryohalolentis (strain ATCC BAA-1226 / DSM 17306 / VKM B-2378 / K5).